The chain runs to 268 residues: Large ribosomal subunit protein bL9m (268 aa).

The transit peptide at 1–52 (MAAAAFAVPRGVQLRVLTERLLRGGVRELLRPRLSGSTPGSERDFSLSHSRG) directs the protein to the mitochondrion.

It belongs to the bacterial ribosomal protein bL9 family. Component of the mitochondrial ribosome large subunit (39S) which comprises a 16S rRNA and about 50 distinct proteins.

It localises to the mitochondrion. The polypeptide is Large ribosomal subunit protein bL9m (MRPL9) (Bos taurus (Bovine)).